The chain runs to 699 residues: Elongation factor G (699 aa).

Residues 8 to 283 (EHIRNIGICA…AVVDFLPSPI (276 aa)) enclose the tr-type G domain. GTP-binding positions include 17-24 (AHIDAGKT), 81-85 (DTPGH), and 135-138 (NKMD).

Belongs to the TRAFAC class translation factor GTPase superfamily. Classic translation factor GTPase family. EF-G/EF-2 subfamily.

Its subcellular location is the cytoplasm. Catalyzes the GTP-dependent ribosomal translocation step during translation elongation. During this step, the ribosome changes from the pre-translocational (PRE) to the post-translocational (POST) state as the newly formed A-site-bound peptidyl-tRNA and P-site-bound deacylated tRNA move to the P and E sites, respectively. Catalyzes the coordinated movement of the two tRNA molecules, the mRNA and conformational changes in the ribosome. This chain is Elongation factor G, found in Rickettsia felis (strain ATCC VR-1525 / URRWXCal2) (Rickettsia azadi).